The sequence spans 550 residues: T-complex protein 1 subunit eta (550 aa).

Residues 529–550 form a disordered region; the sequence is SESANAGMMPPQGAGRGRGMPM.

It belongs to the TCP-1 chaperonin family. As to quaternary structure, heterooligomeric complex of about 850 to 900 kDa that forms two stacked rings, 12 to 16 nm in diameter.

It is found in the cytoplasm. Molecular chaperone; assists the folding of proteins upon ATP hydrolysis. Known to play a role, in vitro, in the folding of actin and tubulin. In yeast may play a role in mitotic spindle formation. In Saccharomyces cerevisiae (strain ATCC 204508 / S288c) (Baker's yeast), this protein is T-complex protein 1 subunit eta (CCT7).